A 637-amino-acid chain; its full sequence is CD2-associated protein (637 aa).

Residues 1-59 (MVDYIVEYDYDAVHDDELTIRVGEIIRNVKKLQEEGWLEGELNGRRGMFPDNFVKEIKR) enclose the SH3 1; truncated domain. Positions 1-175 (MVDYIVEYDY…ESTEDGETHN (175 aa)) are interaction with ANLN and localization to the midbody. Residue Lys58 forms a Glycyl lysine isopeptide (Lys-Gly) (interchain with G-Cter in SUMO2) linkage. A phosphoserine mark is found at Ser80 and Ser86. Positions 108 to 167 (TKKRQCKVLFDYSPQNEDELELIVGDVIDVIEEVEEGWWSGTLNNKLGLFPSNFVKELES) constitute an SH3 2 domain. A compositionally biased stretch (basic and acidic residues) spans 166 to 177 (ESTEDGETHNAQ). The interval 166-209 (ESTEDGETHNAQEESEVPLTGPTSPLPSPGNGSEPAPGSVAQPK) is disordered. The residue at position 224 (Ser224) is a Phosphoserine. Residues 226–254 (KLRTRTSSSETEEKKTEKPLILQPLGSRT) are disordered. In terms of domain architecture, SH3 3 spans 269–330 (KAKEYCRTLF…PDNFAVQISE (62 aa)). Residues 333-455 (KDFPKPKKPP…KLDPEQLPVR (123 aa)) are disordered. 3 short sequence motifs (SH3-binding) span residues 336–352 (PKPK…APKP), 378–397 (KPSK…APTK), and 410–422 (PKRP…PPPP). Over residues 341 to 351 (PPPPAKGPAPK) the composition is skewed to pro residues. The segment covering 356-379 (AAEKKAFPLKAEEKDEKSLLEQKP) has biased composition (basic and acidic residues). Over residues 437–449 (IDTEPVSKPKLDP) the composition is skewed to basic and acidic residues. Phosphoserine is present on residues Ser458, Ser469, Ser510, and Ser514. The segment at 488-555 (HLTANRPKMP…SLSTPSSASK (68 aa)) is disordered. Basic and acidic residues predominate over residues 517–539 (KTLKLPKEDDSGNLKPLEFKKDA). Lys523 is covalently cross-linked (Glycyl lysine isopeptide (Lys-Gly) (interchain with G-Cter in SUMO2)). Over residues 540–555 (SYSSKSSLSTPSSASK) the composition is skewed to low complexity. Residue Thr563 is modified to Phosphothreonine. Residues 578–636 (RNSVDELRAQIIELLCIVDALKKDHGKELEKLRKELEEEKAMRSNLEVEIAKLKKAVLL) adopt a coiled-coil conformation. Ser580 is subject to Phosphoserine.

Homodimer. Interacts with F-actin, PKD2, NPHS1 and NPHS2. Interacts with WTIP. Interacts with DDN; interaction is direct. Interacts (via SH3 2 domain) with CBL (via phosphorylated C-terminus). Interacts with BCAR1/p130Cas (via SH3 domain). Interacts with MVB12A and ARHGAP17. Interacts with ANLN, CD2 and CBLB. Interacts with PDCD6IP and TSG101. Interacts with RIN3. Interacts directly with RET (inactive) and CBLC; upon RET activation by GDNF suggested to dissociate from RET as CBLC:CD2AP complex. Interacts with CGNL1 and SH3BP1; probably part of a complex at cell junctions. Interacts with CAPZA1. In terms of processing, phosphorylated on tyrosine residues; probably by c-Abl, Fyn and c-Src. Expressed in podocytes (at protein level).

The protein resides in the cytoplasm. The protein localises to the cytoskeleton. It is found in the cell projection. It localises to the ruffle. Its subcellular location is the cell junction. Functionally, seems to act as an adapter protein between membrane proteins and the actin cytoskeleton. In collaboration with CBLC, modulates the rate of RET turnover and may act as regulatory checkpoint that limits the potency of GDNF on neuronal survival. Controls CBLC function, converting it from an inhibitor to a promoter of RET degradation. May play a role in receptor clustering and cytoskeletal polarity in the junction between T-cell and antigen-presenting cell. May anchor the podocyte slit diaphragm to the actin cytoskeleton in renal glomerolus. Also required for cytokinesis. Plays a role in epithelial cell junctions formation. This is CD2-associated protein (Cd2ap) from Mus musculus (Mouse).